We begin with the raw amino-acid sequence, 244 residues long: NH(3)-dependent NAD(+) synthetase (244 aa).

ATP is bound at residue 29 to 36 (GISGGIDS). Asp-35 is a Mg(2+) binding site. Arg-113 is a binding site for deamido-NAD(+). Residue Thr-133 participates in ATP binding. Residue Glu-138 participates in Mg(2+) binding. Positions 146 and 153 each coordinate deamido-NAD(+). The ATP site is built by Lys-162 and Thr-184. 230 to 231 (HK) provides a ligand contact to deamido-NAD(+).

The protein belongs to the NAD synthetase family. As to quaternary structure, homodimer.

The catalysed reaction is deamido-NAD(+) + NH4(+) + ATP = AMP + diphosphate + NAD(+) + H(+). Its pathway is cofactor biosynthesis; NAD(+) biosynthesis; NAD(+) from deamido-NAD(+) (ammonia route): step 1/1. Functionally, catalyzes the ATP-dependent amidation of deamido-NAD to form NAD. Uses ammonia as a nitrogen source. The chain is NH(3)-dependent NAD(+) synthetase from Mesoplasma florum (strain ATCC 33453 / NBRC 100688 / NCTC 11704 / L1) (Acholeplasma florum).